An 87-amino-acid chain; its full sequence is Putative regulatory protein BH2513 (87 aa).

Belongs to the RemA family.

The polypeptide is Putative regulatory protein BH2513 (Halalkalibacterium halodurans (strain ATCC BAA-125 / DSM 18197 / FERM 7344 / JCM 9153 / C-125) (Bacillus halodurans)).